The chain runs to 290 residues: MCLAGCTPRKAAAPGRGALPRARLPRTAPAAATMFQPAAKRGFTIESLVAKDGGTGGGTGGGGAGSHLLAAAASEEPLRPTALNYPHPSAAEAAFVSGFPAAAAAGAGRSLYGGPELVFPEAMNHPALTVHPAHQLGASPLQPPHSFFGAQHRDPLHFYPWVLRNRFFGHRFQASDVPQDGLLLHGPFARKPKRIRTAFSPSQLLRLERAFEKNHYVVGAERKQLAGSLSLSETQVKVWFQNRRTKYKRQKLEEEGPESEQKKKGSHHINRWRIATKQANGEDIDVTSND.

The segment at residues 192–251 (PKRIRTAFSPSQLLRLERAFEKNHYVVGAERKQLAGSLSLSETQVKVWFQNRRTKYKRQK) is a DNA-binding region (homeobox). Residues 249 to 290 (RQKLEEEGPESEQKKKGSHHINRWRIATKQANGEDIDVTSND) are disordered. The span at 250–263 (QKLEEEGPESEQKK) shows a compositional bias: basic and acidic residues.

The protein belongs to the EMX homeobox family. Interacts with WRD11 (via the N-terminal and the central portion of the protein); the interaction associates EMX1 with GLI3. As to expression, cerebral cortex.

It is found in the nucleus. The protein localises to the cytoplasm. Its function is as follows. Transcription factor, which in cooperation with EMX2, acts to generate the boundary between the roof and archipallium in the developing brain. May function in combinations with OTX1/2 to specify cell fates in the developing central nervous system. The chain is Homeobox protein EMX1 from Homo sapiens (Human).